Consider the following 368-residue polypeptide: L-cysteine desulfhydrase Cds1 (368 aa).

An N6-(pyridoxal phosphate)lysine modification is found at Lys67. Pyridoxal 5'-phosphate contacts are provided by residues 203–207 (GTGGT) and Ser299.

Belongs to the cysteine synthase/cystathionine beta-synthase family. Cds1 subfamily. Pyridoxal 5'-phosphate is required as a cofactor.

It is found in the cytoplasm. The enzyme catalyses L-cysteine + H2O = hydrogen sulfide + pyruvate + NH4(+) + H(+). In terms of biological role, a cysteine desulfhydrase that generates hydrogen sulfide, H(2)S. The H(2)S produced by this enzyme stimulates respiration in M.tuberculosis, mediated primarily via cytochrome bd with a lesser contribution from cytochrome bc1/aa3. H(2)S modulates the balance between respiration and glycolysis, and also contributes to redox homeostasis. Probably eliminates toxic levels of Cys (which can induce oxidative stress). The protein is L-cysteine desulfhydrase Cds1 of Mycobacterium tuberculosis (strain ATCC 25177 / H37Ra).